Reading from the N-terminus, the 131-residue chain is Small ribosomal subunit protein uS11 (131 aa).

Belongs to the universal ribosomal protein uS11 family. Part of the 30S ribosomal subunit. Interacts with proteins S7 and S18. Binds to IF-3. Interacts with VmlR. Interacts with BrxC.

Located on the platform of the 30S subunit, it bridges several disparate RNA helices of the 16S rRNA. Forms part of the Shine-Dalgarno cleft in the 70S ribosome. The sequence is that of Small ribosomal subunit protein uS11 from Bacillus subtilis (strain 168).